The chain runs to 661 residues: uncharacterized protein (661 aa).

7 helical membrane passes run 37 to 57 (VFLG…LFLS), 87 to 107 (INSP…AVFI), 120 to 140 (WLLL…NVIL), 158 to 178 (VFWQ…PIIV), 243 to 263 (LLDI…LYTI), 266 to 286 (TLMW…IAIG), and 341 to 361 (FNLL…YNYF). The 288-residue stretch at 123-410 (LGVLLSLLFV…VTNQIQNITE (288 aa)) folds into the ABC transmembrane type-1 domain. One can recognise an ABC transporter domain in the interval 453-659 (VALENVTLSP…AEGRWQISPI (207 aa)). 487–494 (GPSGSGKS) is a binding site for ATP.

It belongs to the ABC transporter superfamily.

The protein localises to the cell inner membrane. This is an uncharacterized protein from Synechocystis sp. (strain ATCC 27184 / PCC 6803 / Kazusa).